The sequence spans 145 residues: LIM domain only protein 3 (145 aa).

LIM zinc-binding domains lie at 11-73 (KGCA…LFGV) and 75-137 (GNCA…GLMK).

In Bos taurus (Bovine), this protein is LIM domain only protein 3 (LMO3).